Reading from the N-terminus, the 444-residue chain is MKLFGTDGVRGKAGDFLDAITVLKLAKAAGIYFRKHSTTNKILVGKDTRRSGYMIENALVSGLTAVGYDVIQIGPMPTPAIAYLTESMRCDAGIMISASHNPFEDNGIKFFDNHGNKLNTTCEEEIENIFNDMDLMQSEQVTGRDIGSSKRIDDVIGRYIVAIKSSFPKNLTLKGLRIILDCANGAAYKVGPTILEELGADVITINNKPNGFNINENCGAMHPETVSNLVKEYRADIGLALDGDADRLVVIDEKGEIVDGDNLLGALSVYLKNENLLKGDACVATVMSNKALEDYLQKNKISLFRSNVGDKYVLEVMKEKGINFGGEQSGHIIFSDIAKTGDGLASALQVLALIIKSGKKASEILNPFSLYPQILHNMKVTEKIPLEQITGLEEVLKPIRQKGLRDLIRYSGTENKIRLLLEGKNKKDVEDAMQTLIAFFKKAL.

The Phosphoserine intermediate role is filled by S99. Mg(2+) is bound by residues S99, D242, D244, and D246. S99 carries the phosphoserine modification.

The protein belongs to the phosphohexose mutase family. The cofactor is Mg(2+). Activated by phosphorylation.

The enzyme catalyses alpha-D-glucosamine 1-phosphate = D-glucosamine 6-phosphate. Its function is as follows. Catalyzes the conversion of glucosamine-6-phosphate to glucosamine-1-phosphate. The sequence is that of Phosphoglucosamine mutase from Aliarcobacter butzleri (strain RM4018) (Arcobacter butzleri).